Consider the following 489-residue polypeptide: uncharacterized protein (489 aa).

Residues 2–84 form the 2Fe-2S ferredoxin-type domain; the sequence is IKITVKRFNG…GMIIEPLRGF (83 aa). [2Fe-2S] cluster contacts are provided by cysteine 48, cysteine 53, cysteine 56, and cysteine 68. 2 consecutive 4Fe-4S ferredoxin-type domains span residues 123–155 and 177–205; these read KYVE…YPGP and TAYF…IVHR. Positions 134, 137, 140, 144, 186, 189, 192, and 196 each coordinate [4Fe-4S] cluster.

Belongs to the succinate dehydrogenase/fumarate reductase iron-sulfur protein family.

This is an uncharacterized protein from Methanocaldococcus jannaschii (strain ATCC 43067 / DSM 2661 / JAL-1 / JCM 10045 / NBRC 100440) (Methanococcus jannaschii).